The primary structure comprises 380 residues: Erythronate-4-phosphate dehydrogenase (380 aa).

Substrate contacts are provided by Ser-45 and Thr-66. NAD(+)-binding positions include 126 to 127, Asp-146, Thr-174, 205 to 207, and Asp-231; these read QV and ASR. Residue Arg-207 is part of the active site. The active site involves Glu-236. His-253 functions as the Proton donor in the catalytic mechanism. Gly-256 contacts NAD(+). Tyr-257 contacts substrate.

The protein belongs to the D-isomer specific 2-hydroxyacid dehydrogenase family. PdxB subfamily. Homodimer.

The protein localises to the cytoplasm. It carries out the reaction 4-phospho-D-erythronate + NAD(+) = (R)-3-hydroxy-2-oxo-4-phosphooxybutanoate + NADH + H(+). It participates in cofactor biosynthesis; pyridoxine 5'-phosphate biosynthesis; pyridoxine 5'-phosphate from D-erythrose 4-phosphate: step 2/5. In terms of biological role, catalyzes the oxidation of erythronate-4-phosphate to 3-hydroxy-2-oxo-4-phosphonooxybutanoate. The chain is Erythronate-4-phosphate dehydrogenase from Azotobacter vinelandii (strain DJ / ATCC BAA-1303).